A 151-amino-acid chain; its full sequence is Deoxyuridine 5'-triphosphate nucleotidohydrolase (151 aa).

Substrate contacts are provided by residues 70–72 (RSG), Asn83, 87–89 (LID), and Met97.

The protein belongs to the dUTPase family. It depends on Mg(2+) as a cofactor.

The catalysed reaction is dUTP + H2O = dUMP + diphosphate + H(+). It functions in the pathway pyrimidine metabolism; dUMP biosynthesis; dUMP from dCTP (dUTP route): step 2/2. This enzyme is involved in nucleotide metabolism: it produces dUMP, the immediate precursor of thymidine nucleotides and it decreases the intracellular concentration of dUTP so that uracil cannot be incorporated into DNA. The protein is Deoxyuridine 5'-triphosphate nucleotidohydrolase of Pseudomonas aeruginosa (strain LESB58).